The sequence spans 373 residues: Acyl-CoA dehydrogenase FadE27 (373 aa).

FAD-binding residues include R251, H327, and G331.

The protein belongs to the acyl-CoA dehydrogenase family. As to quaternary structure, heterotetramer (dimer of heterodimers) composed of FadE26 and FadE27. The cofactor is FAD.

The catalysed reaction is (25S)-3-oxocholest-4-en-26-oyl-CoA + A = 3-oxo-cholest-4,24-dien-26-oyl-CoA + AH2. It functions in the pathway steroid metabolism; cholesterol degradation. With respect to regulation, uncompetitively inhibited by high concentration of 3-OCS-CoA. Involved in the first cycle of side chain dehydrogenation in the beta-oxidation of cholesterol catabolism. It contributes partly to the virulence by increasing the efficiency of beta-oxidation. Catalyzes the dehydrogenation of acyl-CoA ester side chains of (25S)-3-oxo-cholest-4-en-26-oyl-CoA (3-OCS-CoA) to yield (24E)-3-oxo-cholest-4,24-dien-26-oyl-CoA. Also able to dehydrogenate steroyl-CoA such as 3-oxo-chol-4-en-24-oyl-CoA (3-OCO-CoA) as well as 3-oxo-4-pregnene-20-carboxyl-CoA (3-OPC-CoA). It dehydrogenates only (25S)-OCS-CoA diastereomer. This is Acyl-CoA dehydrogenase FadE27 (fadE27) from Mycobacterium tuberculosis (strain ATCC 25618 / H37Rv).